The following is a 390-amino-acid chain: 4-hydroxycoumarin synthase 1 (390 aa).

Residue Cys-161 is part of the active site.

It belongs to the thiolase-like superfamily. Chalcone/stilbene synthases family. Homodimer.

It carries out the reaction 2-hydroxybenzoyl-CoA + malonyl-CoA = 4-hydroxycoumarin + CO2 + 2 CoA. Its function is as follows. Type III polyketide synthase involved preferentially in the biosynthesis of 4-hydroxycoumarin from salicoyl-CoA. Can also use benzoyl-CoA and malonyl-CoA to produce 3,5-dihydroxybiphenyl as a major product and benzoyldiacetic acid lactone as a minor side product. Can also use m-hydroxybenzoyl-CoA as substrate, producing m-hydroxybenzoyl diacetic acid lactone as a derailment product. No activity with p-hydroxybenzoyl-CoA, CoA-linked cinnamic acids or acetyl-CoA. The sequence is that of 4-hydroxycoumarin synthase 1 (BIS2) from Sorbus aucuparia (European mountain ash).